Here is a 195-residue protein sequence, read N- to C-terminus: Molybdenum cofactor guanylyltransferase (195 aa).

GTP contacts are provided by residues 10–12, Lys23, Asn51, Asp69, and Asp99; that span reads LAG. Asp99 serves as a coordination point for Mg(2+).

It belongs to the MobA family. In terms of assembly, monomer. Mg(2+) serves as cofactor.

The protein resides in the cytoplasm. It carries out the reaction Mo-molybdopterin + GTP + H(+) = Mo-molybdopterin guanine dinucleotide + diphosphate. Transfers a GMP moiety from GTP to Mo-molybdopterin (Mo-MPT) cofactor (Moco or molybdenum cofactor) to form Mo-molybdopterin guanine dinucleotide (Mo-MGD) cofactor. This chain is Molybdenum cofactor guanylyltransferase, found in Yersinia pestis bv. Antiqua (strain Antiqua).